Reading from the N-terminus, the 364-residue chain is Mannonate dehydratase (364 aa).

The protein belongs to the mannonate dehydratase family. Requires Fe(2+) as cofactor. It depends on Mn(2+) as a cofactor.

The enzyme catalyses D-mannonate = 2-dehydro-3-deoxy-D-gluconate + H2O. Its pathway is carbohydrate metabolism; pentose and glucuronate interconversion. Its function is as follows. Catalyzes the dehydration of D-mannonate. The chain is Mannonate dehydratase from Endomicrobium trichonymphae.